Consider the following 313-residue polypeptide: Proline iminopeptidase (313 aa).

One can recognise an AB hydrolase-1 domain in the interval 35-298; the sequence is KPVVILHGGP…TPGAGHSAFE (264 aa). The Nucleophile role is filled by serine 110. Aspartate 266 is an active-site residue. The active-site Proton donor is the histidine 294.

It belongs to the peptidase S33 family.

The protein resides in the cytoplasm. It carries out the reaction Release of N-terminal proline from a peptide.. In terms of biological role, specifically catalyzes the removal of N-terminal proline residues from peptides. The polypeptide is Proline iminopeptidase (pip) (Xylella fastidiosa (strain Temecula1 / ATCC 700964)).